An 83-amino-acid chain; its full sequence is Hainantoxin-III 6 (83 aa).

The signal sequence occupies residues 1-21; sequence MKASMFLALAGLVLLFVVGYA. A propeptide spanning residues 22-48 is cleaved from the precursor; that stretch reads SESEEKESPRELLSKIFAVDDFKGEER. Intrachain disulfides connect cysteine 50–cysteine 65, cysteine 57–cysteine 70, and cysteine 64–cysteine 77. Leucine 81 bears the Leucine amide mark.

This sequence belongs to the neurotoxin 10 (Hwtx-1) family. 15 (Hntx-3) subfamily. As to quaternary structure, monomer. In terms of tissue distribution, expressed by the venom gland.

The protein localises to the secreted. Functionally, selective antagonist of neuronal tetrodotoxin (TTX)-sensitive voltage-gated sodium channels (IC(50)=1270 nM on Nav1.1/SCN1A, 270 nM on Nav1.2/SCN2A, 491 nM on Nav1.3/SCN3A and 232 nM on Nav1.7/SCN9A). This toxin suppress Nav1.7 current amplitude without significantly altering the activation, inactivation, and repriming kinetics. Short extreme depolarizations partially activate the toxin-bound channel, indicating voltage-dependent inhibition of this toxin. This toxin increases the deactivation of the Nav1.7 current after extreme depolarizations. The toxin-Nav1.7 complex is gradually dissociated upon prolonged strong depolarizations in a voltage-dependent manner, and the unbound toxin rebinds to Nav1.7 after a long repolarization. Moreover, analysis of chimeric channels showed that the DIIS3-S4 linker is critical for toxin binding to Nav1.7. These data are consistent with this toxin interacting with Nav1.7 site 4 and trapping the domain II voltage sensor in the closed state. The chain is Hainantoxin-III 6 from Cyriopagopus hainanus (Chinese bird spider).